We begin with the raw amino-acid sequence, 329 residues long: Quinone oxidoreductase (329 aa).

Ala2 is subject to N-acetylalanine. Residue Lys23 is modified to N6-acetyllysine. Residues Tyr53, 158-161 (SGGV), Gly181, His200, Asn229, 246-249 (VGSR), and 269-271 (VTV) contribute to the NADP(+) site. Ser248 is modified (phosphoserine). Position 296 is an N6-succinyllysine (Lys296).

Belongs to the zinc-containing alcohol dehydrogenase family. Quinone oxidoreductase subfamily. As to quaternary structure, homotetramer.

The protein localises to the cytoplasm. It carries out the reaction 2 a quinone + NADPH + H(+) = 2 a 1,4-benzosemiquinone + NADP(+). Functionally, does not have alcohol dehydrogenase activity. Binds NADP and acts through a one-electron transfer process. Orthoquinones, such as 1,2-naphthoquinone or 9,10-phenanthrenequinone, are the best substrates (in vitro). May act in the detoxification of xenobiotics. Interacts with (AU)-rich elements (ARE) in the 3'-UTR of target mRNA species and enhances their stability. NADPH binding interferes with mRNA binding. In Pongo abelii (Sumatran orangutan), this protein is Quinone oxidoreductase (CRYZ).